Reading from the N-terminus, the 90-residue chain is Defensin-like protein 293 (90 aa).

A signal peptide spans 1 to 26; the sequence is MTSRAKSLFIFFFLISCTFMLLETDA. 3 disulfides stabilise this stretch: C63–C83, C69–C88, and C75–C90.

The protein belongs to the DEFL family.

It is found in the secreted. The polypeptide is Defensin-like protein 293 (Arabidopsis thaliana (Mouse-ear cress)).